Reading from the N-terminus, the 493-residue chain is Probable cytosol aminopeptidase (493 aa).

Residues lysine 257 and aspartate 262 each contribute to the Mn(2+) site. The active site involves lysine 269. Residues aspartate 281, aspartate 341, and glutamate 343 each coordinate Mn(2+). Arginine 345 is an active-site residue.

This sequence belongs to the peptidase M17 family. Mn(2+) serves as cofactor.

The protein resides in the cytoplasm. The catalysed reaction is Release of an N-terminal amino acid, Xaa-|-Yaa-, in which Xaa is preferably Leu, but may be other amino acids including Pro although not Arg or Lys, and Yaa may be Pro. Amino acid amides and methyl esters are also readily hydrolyzed, but rates on arylamides are exceedingly low.. The enzyme catalyses Release of an N-terminal amino acid, preferentially leucine, but not glutamic or aspartic acids.. Presumably involved in the processing and regular turnover of intracellular proteins. Catalyzes the removal of unsubstituted N-terminal amino acids from various peptides. This is Probable cytosol aminopeptidase from Prochlorococcus marinus (strain MIT 9211).